The chain runs to 464 residues: MRLSKALIDMDMADYTEALDPAYTTLEFENMQVLSIGTDTSTSDVTSLSASNSIGINSLCAICGDRATGKHYGASSCDGCKGFFRRSVRKNHMYSCRFSRQCVVDKDKRNQCRYCRLKKCFRAGMKKEAVQNERDRISTRRSSYEDSSLPSINVLIQAEVLSQQITSSVGVLNTDIRGKKIACIIDVCDSMKQQLLVLVEWAKYIPAFCELPLDDQVALLRAHAGEHLLLGATKRSMMFKDILLLGNDRLIPRNCPELEVGRVAVRILDELVLPFQELQIDDNEYACLKAIIFFDPDAKGLSDPTKIKRMRYQVQVSLEDYINDRQYDSRGRFGELLLLLPTLQSITWQMIEQIQFVKLFGMAKIDNLLQEMLLGGSANEASHTHHHLHPHLVQDHLATNVIVANNTLPSQLHNGQMSTPETPQPSPPAGSGAEQYKIVHGTIASINKQPTSIPQSTITKQEAM.

Positions 57 to 132 form a DNA-binding region, nuclear receptor; sequence NSLCAICGDR…AGMKKEAVQN (76 aa). 2 consecutive NR C4-type zinc fingers follow at residues 60 to 80 and 96 to 120; these read CAIC…CDGC and CRFS…LKKC. An NR LBD domain is found at 147–376; it reads SSLPSINVLI…NLLQEMLLGG (230 aa). Residues 367-375 carry the 9aaTAD motif; sequence NLLQEMLLG. Residues 410-421 are compositionally biased toward polar residues; that stretch reads SQLHNGQMSTPE. A disordered region spans residues 410–433; it reads SQLHNGQMSTPETPQPSPPAGSGA.

The protein belongs to the nuclear hormone receptor family. NR2 subfamily. In terms of assembly, homodimerization is required for HNF4-alpha to bind to its recognition site. As to expression, expressed in liver and kidney.

It is found in the nucleus. Its function is as follows. Transcriptional regulator; binds and activates the promoter for the HNF1-alpha gene. Potential initiator of a transcriptional cascade within a subset of cells committed to a specific developmental program. Could be a determinant for asymmetry in early development. May play a role in the regulation of the circadian clock. This is Hepatocyte nuclear factor 4-alpha (hnf4a) from Xenopus laevis (African clawed frog).